The sequence spans 352 residues: Photosystem II protein D1 (352 aa).

Threonine 2 bears the N-acetylthreonine mark. Phosphothreonine is present on threonine 2. The next 3 helical transmembrane spans lie at 29–46, 118–133, and 142–156; these read YIGWFGVIMIPCLLTATS, HFLLGVYCYMGREWEL, and WIAVAYSAPVAAASA. Chlorophyll a is bound at residue histidine 118. Position 126 (tyrosine 126) interacts with pheophytin a. Positions 170 and 189 each coordinate [CaMn4O5] cluster. The chain crosses the membrane as a helical span at residues 197 to 218; the sequence is FHMLGVAGVFGGSLFSAMHGSL. Residue histidine 198 coordinates chlorophyll a. A quinone contacts are provided by residues histidine 215 and 264–265; that span reads SF. A Fe cation-binding site is contributed by histidine 215. Histidine 272 lines the Fe cation pocket. The helical transmembrane segment at 274-288 threads the bilayer; the sequence is FLAAWPVIGIWFTAL. Residues histidine 332, glutamate 333, aspartate 342, and alanine 344 each coordinate [CaMn4O5] cluster. A propeptide spanning residues 345-352 is cleaved from the precursor; sequence STNSSSNN.

It belongs to the reaction center PufL/M/PsbA/D family. As to quaternary structure, PSII is composed of 1 copy each of membrane proteins PsbA, PsbB, PsbC, PsbD, PsbE, PsbF, PsbH, PsbI, PsbJ, PsbK, PsbL, PsbM, PsbT, PsbX, PsbY, PsbZ, Psb30/Ycf12, at least 3 peripheral proteins of the oxygen-evolving complex and a large number of cofactors. It forms dimeric complexes. The D1/D2 heterodimer binds P680, chlorophylls that are the primary electron donor of PSII, and subsequent electron acceptors. It shares a non-heme iron and each subunit binds pheophytin, quinone, additional chlorophylls, carotenoids and lipids. D1 provides most of the ligands for the Mn4-Ca-O5 cluster of the oxygen-evolving complex (OEC). There is also a Cl(-1) ion associated with D1 and D2, which is required for oxygen evolution. The PSII complex binds additional chlorophylls, carotenoids and specific lipids. is required as a cofactor. Tyr-161 forms a radical intermediate that is referred to as redox-active TyrZ, YZ or Y-Z. In terms of processing, C-terminally processed by CTPA; processing is essential to allow assembly of the oxygen-evolving complex and thus photosynthetic growth.

The protein localises to the plastid. It is found in the chloroplast thylakoid membrane. It catalyses the reaction 2 a plastoquinone + 4 hnu + 2 H2O = 2 a plastoquinol + O2. Functionally, this is one of the two reaction center proteins of photosystem II. In terms of biological role, photosystem II (PSII) is a light-driven water:plastoquinone oxidoreductase that uses light energy to abstract electrons from H(2)O, generating O(2) and a proton gradient subsequently used for ATP formation. It consists of a core antenna complex that captures photons, and an electron transfer chain that converts photonic excitation into a charge separation. The D1/D2 (PsbA/PsbD) reaction center heterodimer binds P680, the primary electron donor of PSII as well as several subsequent electron acceptors. The chain is Photosystem II protein D1 from Chlamydomonas reinhardtii (Chlamydomonas smithii).